A 116-amino-acid chain; its full sequence is Large ribosomal subunit protein uL23 (116 aa).

It belongs to the universal ribosomal protein uL23 family. Part of the 50S ribosomal subunit. Contacts protein L29, and trigger factor when it is bound to the ribosome.

Functionally, one of the early assembly proteins it binds 23S rRNA. One of the proteins that surrounds the polypeptide exit tunnel on the outside of the ribosome. Forms the main docking site for trigger factor binding to the ribosome. The chain is Large ribosomal subunit protein uL23 from Psychrobacter sp. (strain PRwf-1).